An 84-amino-acid polypeptide reads, in one-letter code: Small ribosomal subunit protein bS16 (84 aa).

Belongs to the bacterial ribosomal protein bS16 family.

The chain is Small ribosomal subunit protein bS16 from Delftia acidovorans (strain DSM 14801 / SPH-1).